A 321-amino-acid chain; its full sequence is Cytochrome c biogenesis protein CcsA (321 aa).

The next 7 membrane-spanning stretches (helical) occupy residues 17 to 37, 43 to 63, 71 to 91, 143 to 163, 225 to 245, 258 to 273, and 286 to 306; these read IISI…IVGL, KGMI…WIYS, LYES…VPKI, MLLS…LLVI, VISL…VWAN, ETWA…IYLH, and AIVA…VNLL.

Belongs to the CcmF/CycK/Ccl1/NrfE/CcsA family. As to quaternary structure, may interact with Ccs1.

Its subcellular location is the plastid. It is found in the chloroplast thylakoid membrane. Its function is as follows. Required during biogenesis of c-type cytochromes (cytochrome c6 and cytochrome f) at the step of heme attachment. This is Cytochrome c biogenesis protein CcsA from Liriodendron tulipifera (Tuliptree).